The chain runs to 281 residues: NH(3)-dependent NAD(+) synthetase (281 aa).

24–31 (GVSGGVDS) contributes to the ATP binding site. Asp30 is a Mg(2+) binding site. Arg145 serves as a coordination point for deamido-NAD(+). An ATP-binding site is contributed by Thr165. Glu170 is a binding site for Mg(2+). Positions 178 and 185 each coordinate deamido-NAD(+). The ATP site is built by Lys194 and Ser216.

Belongs to the NAD synthetase family. As to quaternary structure, homodimer.

It catalyses the reaction deamido-NAD(+) + NH4(+) + ATP = AMP + diphosphate + NAD(+) + H(+). The protein operates within cofactor biosynthesis; NAD(+) biosynthesis; NAD(+) from deamido-NAD(+) (ammonia route): step 1/1. In terms of biological role, catalyzes the ATP-dependent amidation of deamido-NAD to form NAD. Uses ammonia as a nitrogen source. This chain is NH(3)-dependent NAD(+) synthetase (nadE1), found in Thermotoga maritima (strain ATCC 43589 / DSM 3109 / JCM 10099 / NBRC 100826 / MSB8).